The following is a 435-amino-acid chain: Protein lin-54 (435 aa).

The tract at residues Asp73 to Pro136 is disordered. Polar residues predominate over residues Thr102–Pro120. The region spanning Gln173–Thr288 is the CRC domain. The segment at Lys175–Tyr188 is DNA-binding. The Zn(2+) site is built by Cys177, Cys179, Cys184, Cys189, Cys191, Cys198, Cys201, Cys203, and Cys206. Positions Ile235 to Gln250 are linker. Residues Cys253, Cys255, Cys260, Cys265, Cys267, Cys274, Cys278, Cys280, and Cys283 each contribute to the Zn(2+) site. The tract at residues Cys253–Glu266 is DNA-binding. The interval Leu415–Ser435 is disordered.

The protein belongs to the lin-54 family. As to quaternary structure, component of the DRM complex, at least composed of lin-9, lin-35, lin-37, lin-52, lin-53, lin-54- dpl-1 and efl-1.

Its subcellular location is the nucleus. The protein localises to the chromosome. Its function is as follows. Synthetic multivulva class B (synMuvB) protein. SynMuvB proteins are required to repress the induction of vulval development by Ras signaling and probably act by forming the multiprotein DRM complex that repress transcription. This is Protein lin-54 from Caenorhabditis elegans.